Here is a 218-residue protein sequence, read N- to C-terminus: Capsid protein (218 aa).

An N-acetylmethionine; by host modification is found at Met-1. The tract at residues 1 to 30 (MDKSESTSAGRNRRRRPRRGSRSAPSSSDA) is disordered. Residues 11-21 (RNRRRRPRRGS) are compositionally biased toward basic residues.

Belongs to the cucumovirus capsid protein family.

The protein resides in the virion. Capsid protein. Probably binds RNA and plays a role in packaging. The sequence is that of Capsid protein from Cucumis sativus (Cucumber).